Consider the following 495-residue polypeptide: MSCLLNNMVLMGLALLVCGVQAFFLPNTTSLEKLLSKYQHAEPHSRVRRAIPMSDRQEILMLHNKLRGQVYPPASNMEHMTWDEELERSAAAWAHRCLWEHGPAGLLRSIGQNLAVHWGRYRSPGFHVQSWYDEVKDYTYPYPHECTPRCRERCSGPMCTHYTQMVWATTNKIGCAVHTCRNMNVWGDTWENAVYLVCNYSPKGNWIGEAPYKHGRPCSECPSSYGGGCLNNLCHRAEKPHKHKPEVDMMNEVESPPAPEETHVWVQPRVIKTKKTPVINFMTQVVHCDTKMKDSCKGSTCNRYQCPAGCLSNKAKVFGSLFYESSSSICRAAIHYGVIDDRGGLVDVTRNGMVPFFVKSQKNGMESLSKYKPSSSFTVSKVTETAVDCHATVAQLCPFEKPATHCPRIQCPARCGEEPSYWAPVYGTNIYADTSSICKAAVHAGVIVDEVGGYADVMPVDKKKSYVGSLRNGVQSESLNTPQNGNAFRIFAVRQ.

The N-terminal stretch at 1 to 22 (MSCLLNNMVLMGLALLVCGVQA) is a signal peptide. N-linked (GlcNAc...) asparagine glycosylation occurs at Asn-27. One can recognise an SCP domain in the interval 60 to 200 (LMLHNKLRGQ…ENAVYLVCNY (141 aa)). 2 LCCL domains span residues 282–377 (MTQV…SSSF) and 383–486 (TETA…QNGN). Cystine bridges form between Cys-288/Cys-306, Cys-310/Cys-330, Cys-389/Cys-411, and Cys-415/Cys-438.

Binds to heparin, dermatan sulfate and chondroitin sulfate. Present in kidney renal tubules (at protein level).

It localises to the secreted. In terms of biological role, promotes matrix assembly. This is Cysteine-rich secretory protein LCCL domain-containing 2 (Crispld2) from Mus musculus (Mouse).